Consider the following 75-residue polypeptide: Exodeoxyribonuclease 7 small subunit (75 aa).

Belongs to the XseB family. Heterooligomer composed of large and small subunits.

It is found in the cytoplasm. The catalysed reaction is Exonucleolytic cleavage in either 5'- to 3'- or 3'- to 5'-direction to yield nucleoside 5'-phosphates.. Its function is as follows. Bidirectionally degrades single-stranded DNA into large acid-insoluble oligonucleotides, which are then degraded further into small acid-soluble oligonucleotides. This Clostridium perfringens (strain ATCC 13124 / DSM 756 / JCM 1290 / NCIMB 6125 / NCTC 8237 / Type A) protein is Exodeoxyribonuclease 7 small subunit.